The primary structure comprises 180 residues: D(1A) dopamine receptor (180 aa).

Residues 1–10 form a helical membrane-spanning segment; the sequence is NTLLVCAAVI. Topologically, residues 11-21 are cytoplasmic; it reads RFRHLRSKVTN. A helical transmembrane segment spans residues 22 to 48; that stretch reads FFVISLAVSDLLVAVLVMPWKAVAEIA. Residues 49–57 are Extracellular-facing; it reads GFWPFGSFC. Cys-57 and Cys-147 are oxidised to a cystine. The chain crosses the membrane as a helical span at residues 58-80; that stretch reads NIWVAFDIMCSTASILNLCVISV. The Cytoplasmic segment spans residues 81–99; sequence DRYWAISSPFRYERKMTPK. The chain crosses the membrane as a helical span at residues 100–124; it reads AAFILIGVAWTLSVLISFIPVQLSW. Residues 125–153 lie on the Extracellular side of the membrane; it reads HKAKPTSPPDGNATSLDETVDNCDSSLSR. A glycan (N-linked (GlcNAc...) asparagine) is linked at Asn-136. Residues 154–179 traverse the membrane as a helical segment; the sequence is TYSISSSLVNFYNPVAIMXVTYTRIH. A topological domain (cytoplasmic) is located at residue Arg-180.

It belongs to the G-protein coupled receptor 1 family. Interacts with DNAJC14 via its C-terminus. Interacts with DRD2. Interacts with DORIP1.

The protein localises to the cell membrane. It localises to the endoplasmic reticulum membrane. Its subcellular location is the cell projection. It is found in the cilium membrane. Dopamine receptor whose activity is mediated by G proteins which activate adenylyl cyclase. This Oryctolagus cuniculus (Rabbit) protein is D(1A) dopamine receptor (DRD1).